Here is a 1486-residue protein sequence, read N- to C-terminus: Chromosome partition protein MukB (1486 aa).

34 to 41 provides a ligand contact to ATP; sequence GGNGAGKS. Coiled coils occupy residues 326-418, 444-480, and 509-603; these read LEAD…QYNQ, LETF…QAYQ, and RHLA…RAPV. Residues 666–783 form a flexible hinge region; sequence PGGSEDQRLN…EVPLFGRAAR (118 aa). 3 coiled-coil regions span residues 835 to 923, 977 to 1115, and 1209 to 1266; these read EAEI…AKLE, EMLS…TAKA, and VEAI…QNVS.

It belongs to the SMC family. MukB subfamily. In terms of assembly, homodimerization via its hinge domain. Binds to DNA via its C-terminal region. Interacts, and probably forms a ternary complex, with MukE and MukF via its C-terminal region. The complex formation is stimulated by calcium or magnesium. Interacts with tubulin-related protein FtsZ.

It is found in the cytoplasm. It localises to the nucleoid. In terms of biological role, plays a central role in chromosome condensation, segregation and cell cycle progression. Functions as a homodimer, which is essential for chromosome partition. Involved in negative DNA supercoiling in vivo, and by this means organize and compact chromosomes. May achieve or facilitate chromosome segregation by condensation DNA from both sides of a centrally located replisome during cell division. The chain is Chromosome partition protein MukB from Escherichia coli O81 (strain ED1a).